The chain runs to 200 residues: ATP-dependent Clp protease proteolytic subunit 1 (200 aa).

Residue Ser98 is the Nucleophile of the active site. His123 is a catalytic residue.

This sequence belongs to the peptidase S14 family. As to quaternary structure, fourteen ClpP subunits assemble into 2 heptameric rings which stack back to back to give a disk-like structure with a central cavity, resembling the structure of eukaryotic proteasomes.

It is found in the cytoplasm. The enzyme catalyses Hydrolysis of proteins to small peptides in the presence of ATP and magnesium. alpha-casein is the usual test substrate. In the absence of ATP, only oligopeptides shorter than five residues are hydrolyzed (such as succinyl-Leu-Tyr-|-NHMec, and Leu-Tyr-Leu-|-Tyr-Trp, in which cleavage of the -Tyr-|-Leu- and -Tyr-|-Trp bonds also occurs).. Cleaves peptides in various proteins in a process that requires ATP hydrolysis. Has a chymotrypsin-like activity. Plays a major role in the degradation of misfolded proteins. This is ATP-dependent Clp protease proteolytic subunit 1 from Mycobacterium leprae (strain TN).